Here is a 235-residue protein sequence, read N- to C-terminus: Orotidine 5'-phosphate decarboxylase (235 aa).

Substrate contacts are provided by residues aspartate 12, lysine 34, 61–70, threonine 116, arginine 177, glutamine 186, and arginine 207; that span reads DMKLLDIDNT. The active-site Proton donor is the lysine 63.

This sequence belongs to the OMP decarboxylase family. Type 1 subfamily. In terms of assembly, homodimer.

The catalysed reaction is orotidine 5'-phosphate + H(+) = UMP + CO2. The protein operates within pyrimidine metabolism; UMP biosynthesis via de novo pathway; UMP from orotate: step 2/2. In terms of biological role, catalyzes the decarboxylation of orotidine 5'-monophosphate (OMP) to uridine 5'-monophosphate (UMP). The protein is Orotidine 5'-phosphate decarboxylase of Agrobacterium fabrum (strain C58 / ATCC 33970) (Agrobacterium tumefaciens (strain C58)).